We begin with the raw amino-acid sequence, 1166 residues long: Reverse gyrase (1166 aa).

An RG N-terminal-type zinc finger spans residues 1 to 40 (MINVMYKNSCPNCGGDISADRLLNGLPCETCLPYINGIDG). 4 residues coordinate Zn(2+): Cys-10, Cys-13, Cys-28, and Cys-31. ATP contacts are provided by residues Gln-92 and 109-116 (APTGLGKT). The region spanning 96-285 (LRRLVSNQSF…ALRLLTGFEP (190 aa)) is the Helicase ATP-binding domain. Positions 190–193 (DDAD) match the DEAD box motif. Residues 576–1166 (FNISTGLLIV…VNPLKSEQNV (591 aa)) are topoisomerase I. Residues 580 to 743 (TGLLIVESPT…NIYRITYHEI (164 aa)) form the Toprim domain. Glu-586 lines the Mg(2+) pocket. The RG C-terminal-type zinc finger occupies 662–689 (IKKCLDCNKTFSIASDKCPYCGSTNVQT). 4 residues coordinate Zn(2+): Cys-665, Cys-668, Cys-679, and Cys-682. Mg(2+) is bound at residue Asp-712. One can recognise a Topo IA-type catalytic domain in the interval 759–1157 (NTNLVMSQIV…EIFSEISTLV (399 aa)). Tyr-903 functions as the O-(5'-phospho-DNA)-tyrosine intermediate in the catalytic mechanism.

This sequence in the N-terminal section; belongs to the DEAD box helicase family. DDVD subfamily. The protein in the C-terminal section; belongs to the type IA topoisomerase family. In terms of assembly, monomer. Zn(2+) serves as cofactor. The cofactor is Mg(2+).

Its subcellular location is the cytoplasm. It catalyses the reaction ATP + H2O = ADP + phosphate + H(+). With respect to regulation, inhibited by UV light-induced lesions; substrate is completely cleaved but a nicked form accumulates, suggesting the reaction is blocked between the cleavage and ligation steps. Inhibited by actinomycin D; substrate DNA remains negatively supercoiled in this case. Activity is stimulated by SSB from S.solfataricus strain P2. Positive supercoiling is inhibited by Sul7d (also called Sso7d) from S.solfataricus strain MT4; SSB from S.solfataricus strain P2 relieves this inhibition. Modifies the topological state of DNA by introducing positive supercoils in an ATP-dependent process. Increases the linking number in steps of +1. In vitro requires high concentrations to supercoil negatively supercoiled DNA, relaxes plasmid DNA first; DNA single-strand binding protein (SSB) from S.solfataricus strain P2 stimulates positive supercoiling. SSB stimulates DNA-binding by reverse gyrase, and thus all subsequent steps. Binds to single-stranded DNA, transiently cleaves and then rejoins the ends, introducing a positive supercoil in the process. The scissile phosphodiester is attacked by the catalytic tyrosine of the enzyme, resulting in the formation of a DNA-(5'-phosphotyrosyl)-enzyme intermediate. May be involved in DNA damage response. Probably involved in rewinding DNA strands in regions of the chromosome that have opened up to allow replication, transcription, DNA repair and/or for DNA protection. This chain is Reverse gyrase, found in Saccharolobus shibatae (strain ATCC 51178 / DSM 5389 / JCM 8931 / NBRC 15437 / B12) (Sulfolobus shibatae).